A 565-amino-acid chain; its full sequence is Translation machinery-associated protein 64 (565 aa).

Positions 89–170 (LPIVLTHGFV…VAVKIIHHFN (82 aa)) constitute a PUA domain. Positions 362–447 (TLYKPFNLAK…GEILHPLLTN (86 aa)) constitute an SWIB/MDM2 domain. The SUI1 domain occupies 475 to 547 (IKIITEMKIG…SIIDHLNKLG (73 aa)).

This sequence belongs to the eIF2D family. Interacts with the 40S ribosomal subunit.

In Saccharomyces cerevisiae (strain ATCC 204508 / S288c) (Baker's yeast), this protein is Translation machinery-associated protein 64 (TMA64).